Reading from the N-terminus, the 1072-residue chain is Carbamoyl phosphate synthase large chain (1072 aa).

The tract at residues 1 to 401 (MPKYKDINKV…SLLKAVRSLE (401 aa)) is carboxyphosphate synthetic domain. Residues arginine 129, arginine 169, glycine 175, glycine 176, lysine 208, leucine 210, glutamate 215, glycine 241, valine 242, histidine 243, glutamine 284, and glutamate 298 each contribute to the ATP site. The ATP-grasp 1 domain occupies 133-327 (KRKMQEIGEP…IAKVAAKIAI (195 aa)). Mg(2+) is bound by residues glutamine 284, glutamate 298, and asparagine 300. Mn(2+)-binding residues include glutamine 284, glutamate 298, and asparagine 300. Residues 402–544 (IKAYGLRLNN…YIYSTYGEED (143 aa)) are oligomerization domain. The interval 545–929 (EVEIHEIPKV…ALYKALEGAG (385 aa)) is carbamoyl phosphate synthetic domain. Residues 671-861 (SKLLKELNIN…MVKLAVEVAL (191 aa)) enclose the ATP-grasp 2 domain. ATP contacts are provided by arginine 707, lysine 746, isoleucine 748, glutamate 752, glycine 777, valine 778, histidine 779, serine 780, glutamine 820, and glutamate 832. Glutamine 820, glutamate 832, and asparagine 834 together coordinate Mg(2+). Positions 820, 832, and 834 each coordinate Mn(2+). The region spanning 930-1072 (LKIPKKGKIL…QKDNVKNLVL (143 aa)) is the MGS-like domain. The interval 930–1072 (LKIPKKGKIL…QKDNVKNLVL (143 aa)) is allosteric domain.

Belongs to the CarB family. As to quaternary structure, composed of two chains; the small (or glutamine) chain promotes the hydrolysis of glutamine to ammonia, which is used by the large (or ammonia) chain to synthesize carbamoyl phosphate. Tetramer of heterodimers (alpha,beta)4. Mg(2+) serves as cofactor. Mn(2+) is required as a cofactor.

The catalysed reaction is hydrogencarbonate + L-glutamine + 2 ATP + H2O = carbamoyl phosphate + L-glutamate + 2 ADP + phosphate + 2 H(+). It catalyses the reaction hydrogencarbonate + NH4(+) + 2 ATP = carbamoyl phosphate + 2 ADP + phosphate + 2 H(+). It functions in the pathway amino-acid biosynthesis; L-arginine biosynthesis; carbamoyl phosphate from bicarbonate: step 1/1. It participates in pyrimidine metabolism; UMP biosynthesis via de novo pathway; (S)-dihydroorotate from bicarbonate: step 1/3. Its function is as follows. Large subunit of the glutamine-dependent carbamoyl phosphate synthetase (CPSase). CPSase catalyzes the formation of carbamoyl phosphate from the ammonia moiety of glutamine, carbonate, and phosphate donated by ATP, constituting the first step of 2 biosynthetic pathways, one leading to arginine and/or urea and the other to pyrimidine nucleotides. The large subunit (synthetase) binds the substrates ammonia (free or transferred from glutamine from the small subunit), hydrogencarbonate and ATP and carries out an ATP-coupled ligase reaction, activating hydrogencarbonate by forming carboxy phosphate which reacts with ammonia to form carbamoyl phosphate. This Thermoanaerobacter sp. (strain X514) protein is Carbamoyl phosphate synthase large chain.